Reading from the N-terminus, the 429-residue chain is ATP-dependent Clp protease ATP-binding subunit ClpX (429 aa).

Residues 1 to 54 (MARSKSQKIEGCSFCGRTRAEAEGKIISAKSVAICFECSKICHNLFKEESDKPA) enclose the ClpX-type ZB domain. Residues cysteine 12, cysteine 15, cysteine 35, and cysteine 38 each contribute to the Zn(2+) site. Residue 119 to 126 (PTGSGKTL) participates in ATP binding.

It belongs to the ClpX chaperone family. Component of the ClpX-ClpP complex. Forms a hexameric ring that, in the presence of ATP, binds to fourteen ClpP subunits assembled into a disk-like structure with a central cavity, resembling the structure of eukaryotic proteasomes.

In terms of biological role, ATP-dependent specificity component of the Clp protease. It directs the protease to specific substrates. Can perform chaperone functions in the absence of ClpP. The protein is ATP-dependent Clp protease ATP-binding subunit ClpX of Borrelia duttonii (strain Ly).